The following is a 516-amino-acid chain: Protein DML1 (516 aa).

Belongs to the misato family.

The protein localises to the mitochondrion. In terms of biological role, involved in the partitioning of the mitochondrial organelle and mitochondrial DNA (mtDNA) inheritance. This Coccidioides immitis (strain RS) (Valley fever fungus) protein is Protein DML1 (DML1).